The chain runs to 81 residues: Large ribosomal subunit protein bL27 (81 aa).

The segment at 1–22 is disordered; it reads MAHKTGQSSSSNGRESKSKRLG.

The protein belongs to the bacterial ribosomal protein bL27 family.

The chain is Large ribosomal subunit protein bL27 from Opitutus terrae (strain DSM 11246 / JCM 15787 / PB90-1).